Reading from the N-terminus, the 809-residue chain is Sucrose synthase 3 (809 aa).

The segment at 277–755 (MVFNVVILSP…GLQRIYERYT (479 aa)) is GT-B glycosyltransferase.

This sequence belongs to the glycosyltransferase 1 family. Plant sucrose synthase subfamily. As to expression, detected in the whole plant with highest expression in developing siliques, vasculature of cotyledons and stomatal guard cells. Also detected throughout the mature parts of the root but not in the expanding zone.

The enzyme catalyses an NDP-alpha-D-glucose + D-fructose = a ribonucleoside 5'-diphosphate + sucrose + H(+). In terms of biological role, sucrose-cleaving enzyme that provides UDP-glucose and fructose for various metabolic pathways. Modulates metabolic homeostasis and direct carbon towards starch synthesis in developing seeds. The polypeptide is Sucrose synthase 3 (SUS3) (Arabidopsis thaliana (Mouse-ear cress)).